A 335-amino-acid chain; its full sequence is GTPase Obg (335 aa).

Residues 1–159 form the Obg domain; the sequence is MQFIDRSEIE…RKLLLELKLL (159 aa). One can recognise an OBG-type G domain in the interval 160–328; sequence AEVGIIGLPN…LLARVWQVLE (169 aa). GTP contacts are provided by residues 166–173, 191–195, 213–216, 280–283, and 309–311; these read GLPNAGKS, FTTLV, DIPG, NKAD, and SAA. Mg(2+) contacts are provided by Ser173 and Thr193.

Belongs to the TRAFAC class OBG-HflX-like GTPase superfamily. OBG GTPase family. In terms of assembly, monomer. The cofactor is Mg(2+).

It localises to the cytoplasm. In terms of biological role, an essential GTPase which binds GTP, GDP and possibly (p)ppGpp with moderate affinity, with high nucleotide exchange rates and a fairly low GTP hydrolysis rate. Plays a role in control of the cell cycle, stress response, ribosome biogenesis and in those bacteria that undergo differentiation, in morphogenesis control. This chain is GTPase Obg, found in Gloeobacter violaceus (strain ATCC 29082 / PCC 7421).